We begin with the raw amino-acid sequence, 305 residues long: UDP-3-O-acyl-N-acetylglucosamine deacetylase (305 aa).

Zn(2+) contacts are provided by histidine 79, histidine 238, and aspartate 242. Histidine 265 functions as the Proton donor in the catalytic mechanism.

This sequence belongs to the LpxC family. Zn(2+) serves as cofactor.

It carries out the reaction a UDP-3-O-[(3R)-3-hydroxyacyl]-N-acetyl-alpha-D-glucosamine + H2O = a UDP-3-O-[(3R)-3-hydroxyacyl]-alpha-D-glucosamine + acetate. It participates in glycolipid biosynthesis; lipid IV(A) biosynthesis; lipid IV(A) from (3R)-3-hydroxytetradecanoyl-[acyl-carrier-protein] and UDP-N-acetyl-alpha-D-glucosamine: step 2/6. Catalyzes the hydrolysis of UDP-3-O-myristoyl-N-acetylglucosamine to form UDP-3-O-myristoylglucosamine and acetate, the committed step in lipid A biosynthesis. This is UDP-3-O-acyl-N-acetylglucosamine deacetylase from Shigella boydii serotype 4 (strain Sb227).